The sequence spans 843 residues: Protein P (843 aa).

A terminal protein domain (TP) region spans residues M1–Q177. The spacer stretch occupies residues E178–L346. The tract at residues K228 to S316 is disordered. 3 stretches are compositionally biased toward polar residues: residues T262–F276, N286–G299, and V307–S316. The interval E347–Q690 is polymerase/reverse transcriptase domain (RT). One can recognise a Reverse transcriptase domain in the interval E357–I600. Residues D429, D551, and D552 each coordinate Mg(2+).

The protein belongs to the hepadnaviridae P protein family.

The catalysed reaction is DNA(n) + a 2'-deoxyribonucleoside 5'-triphosphate = DNA(n+1) + diphosphate. It carries out the reaction Endonucleolytic cleavage to 5'-phosphomonoester.. Activated by host HSP70 and HSP40 in vitro to be able to bind the epsilon loop of the pgRNA. Because deletion of the RNase H region renders the protein partly chaperone-independent, the chaperones may be needed indirectly to relieve occlusion of the RNA-binding site by this domain. Inhibited by several reverse-transcriptase inhibitors: Lamivudine, Adefovir and Entecavir. Its function is as follows. Multifunctional enzyme that converts the viral RNA genome into dsDNA in viral cytoplasmic capsids. This enzyme displays a DNA polymerase activity that can copy either DNA or RNA templates, and a ribonuclease H (RNase H) activity that cleaves the RNA strand of RNA-DNA heteroduplexes in a partially processive 3'- to 5'-endonucleasic mode. Neo-synthesized pregenomic RNA (pgRNA) are encapsidated together with the P protein, and reverse-transcribed inside the nucleocapsid. Initiation of reverse-transcription occurs first by binding the epsilon loop on the pgRNA genome, and is initiated by protein priming, thereby the 5'-end of (-)DNA is covalently linked to P protein. Partial (+)DNA is synthesized from the (-)DNA template and generates the relaxed circular DNA (RC-DNA) genome. After budding and infection, the RC-DNA migrates in the nucleus, and is converted into a plasmid-like covalently closed circular DNA (cccDNA). The activity of P protein does not seem to be necessary for cccDNA generation, and is presumably released from (+)DNA by host nuclear DNA repair machinery. The sequence is that of Protein P from Homo sapiens (Human).